A 2144-amino-acid polypeptide reads, in one-letter code: Polyketide synthase-like protein Preu9 (2144 aa).

Positions 1-250 (MYALHLAVNA…GANAHCIIDH (250 aa)) constitute a Ketosynthase family 3 (KS3) domain. The disordered stretch occupies residues 276–325 (QNGHLNEFAANGTTNAPSRDHRNGITDGRADGNTNGHPNANGDVGGNPIN). A compositionally biased stretch (basic and acidic residues) spans 293-305 (SRDHRNGITDGRA). Residues 435–738 (FVFTGQGAQW…KSPVEQILKS (304 aa)) form a malonyl-CoA:ACP transacylase (MAT) region. Residues 827 to 965 (HDLLGSKVVG…GCVKLIIKSS (139 aa)) are N-terminal hotdog fold. The dehydratase (DH) domain stretch occupies residues 827–1137 (HDLLGSKVVG…ERLRCVSYSR (311 aa)). Residues 827-1141 (HDLLGSKVVG…CVSYSRISSD (315 aa)) enclose the PKS/mFAS DH domain. Histidine 859 (proton acceptor; for dehydratase activity) is an active-site residue. The C-terminal hotdog fold stretch occupies residues 979–1141 (TLRPVDVRAW…CVSYSRISSD (163 aa)). The active-site Proton donor; for dehydratase activity is the aspartate 1050. The interval 1305–1494 (TGIYPQLHRI…GLDVVLDDFP (190 aa)) is methyltransferase (MT) domain. The interval 1731–2042 (GVPNSLCFAS…LANMIGKLVV (312 aa)) is enoyl reductase (ER) domain.

Its function is as follows. Polyketide synthase-like protein that lacks important domains such as carrier domain and does probably not function as a polyketide synthase. The sequence is that of Polyketide synthase-like protein Preu9 from Preussia isomera (Coprophilous fungus).